The following is a 494-amino-acid chain: Smoothelin-like protein 1 (494 aa).

Basic and acidic residues-rich tracts occupy residues 1–10 (MEQKEGKLSE), 74–104 (DEVK…KEET), 112–166 (TGRK…KATV), and 179–232 (TGQR…KEEA). Residues 1 to 348 (MEQKEGKLSE…ARPRGPRAQN (348 aa)) are disordered. Residues 123-145 (KEAEEKESTLASEKQKAEEKEAK) are a coiled coil. The segment covering 233–255 (DAKEEAEDAEEAEPGSPSEEQEQ) has biased composition (acidic residues). 2 stretches are compositionally biased toward low complexity: residues 269 to 279 (PSSPEEWPESP) and 302 to 314 (SPSA…SDVP). Positions 324 to 335 (GEKKEKAPERRV) are enriched in basic and acidic residues. At Ser-336 the chain carries Phosphoserine. Residues 378-484 (GGVKNMLLEW…YIQELYRSLV (107 aa)) enclose the Calponin-homology (CH) domain. Residues 476–494 (IQELYRSLVQKGLVKTKKK) form a calmodulin-binding region.

This sequence belongs to the smoothelin family. In terms of assembly, interacts with PPP1R12A. In terms of processing, maximal phosphorylation of Ser-336 correlates with maximal relaxation of aorta in response to acetylcholine. As to expression, expressed in striated muscles, specifically in type 2a fibers (at protein level).

The protein resides in the cytoplasm. Its subcellular location is the myofibril. The protein localises to the sarcomere. It localises to the i band. It is found in the m line. The protein resides in the nucleus. Its function is as follows. Plays a role in the regulation of contractile properties of both striated and smooth muscles. When unphosphorylated, may inhibit myosin dephosphorylation. Phosphorylation at Ser-299 reduces this inhibitory activity. The protein is Smoothelin-like protein 1 (SMTNL1) of Homo sapiens (Human).